The sequence spans 68 residues: Pantinin-3 (68 aa).

An N-terminal signal peptide occupies residues 1-23; that stretch reads MKTQFAILLIALVLFQLLSQSDA. Leucine amide is present on leucine 36. Residues 40-68 constitute a propeptide that is removed on maturation; the sequence is GLNELDNLDELFDGEISQADIDFLKELMS.

This sequence belongs to the non-disulfide-bridged peptide (NDBP) superfamily. Short antimicrobial peptide (group 4) family. In terms of tissue distribution, expressed by the venom gland.

The protein resides in the secreted. The protein localises to the target cell membrane. Functionally, amphipathic peptide that possesses relatively strong activities against Gram-positive bacteria and a fungus, but has very weak antimicrobial activities against Gram-negative bacteria. Also exhibits mild hemolytic activities against human erythrocytes (16 uM induce 70% of hemolysis). Furthermore, this peptide potently inhibits the growth of vancomycin-resistant Enterococcus (VRE) S13, a pathogen that can cause a number of human infections. Minimal inhibitory concentration (MIC) are the following: 16 uM against S.aureus, 6 uM against B.magaterium, 8 uM against M.luteus, 4 uM against VRE, 12 uM against methicillin-resistant S.aureus, 36 uM against E.coli, &gt;87 uM against P.putida, 87 uM against K.oxytoca, &gt;87 uM against E.cloacae, 84 uM against S.enterica and 17 uM against the fungus C.tropicalis. In Pandinus imperator (Emperor scorpion), this protein is Pantinin-3.